Consider the following 492-residue polypeptide: Adenosylhomocysteinase-like 2 (492 aa).

Residues 43–64 (FTGSSDEEDVSPKDNHQRNSAG) are disordered. Aspartate 192 and glutamate 217 together coordinate substrate. Residue 218–220 (SVT) participates in NAD(+) binding. Residues lysine 247 and aspartate 251 each coordinate substrate. NAD(+) is bound by residues 283-288 (GDVGKG), glutamate 304, 360-362 (MGH), asparagine 407, lysine 486, 486-490 (KANYY), and tyrosine 490.

Belongs to the adenosylhomocysteinase family. NAD(+) serves as cofactor.

In terms of biological role, might play a role in the regulation of methionine metabolism. In Drosophila melanogaster (Fruit fly), this protein is Adenosylhomocysteinase-like 2.